The sequence spans 223 residues: N-(5'-phosphoribosyl)anthranilate isomerase (223 aa).

The protein belongs to the TrpF family.

It catalyses the reaction N-(5-phospho-beta-D-ribosyl)anthranilate = 1-(2-carboxyphenylamino)-1-deoxy-D-ribulose 5-phosphate. It participates in amino-acid biosynthesis; L-tryptophan biosynthesis; L-tryptophan from chorismate: step 3/5. The protein is N-(5'-phosphoribosyl)anthranilate isomerase of Bradyrhizobium diazoefficiens (strain JCM 10833 / BCRC 13528 / IAM 13628 / NBRC 14792 / USDA 110).